We begin with the raw amino-acid sequence, 232 residues long: Imidazoleglycerol-phosphate dehydratase (232 aa).

Belongs to the imidazoleglycerol-phosphate dehydratase family.

The catalysed reaction is D-erythro-1-(imidazol-4-yl)glycerol 3-phosphate = 3-(imidazol-4-yl)-2-oxopropyl phosphate + H2O. It functions in the pathway amino-acid biosynthesis; L-histidine biosynthesis; L-histidine from 5-phospho-alpha-D-ribose 1-diphosphate: step 6/9. In Lachancea kluyveri (strain ATCC 58438 / CBS 3082 / BCRC 21498 / NBRC 1685 / JCM 7257 / NCYC 543 / NRRL Y-12651) (Yeast), this protein is Imidazoleglycerol-phosphate dehydratase (HIS3).